Here is a 334-residue protein sequence, read N- to C-terminus: MSTVQEKLITNVCQDKAAKPTNKITIVGVGQVGMACAVSVLLKELADELALVDILEDKLKGEVMDLQHGSLFLKTPTIVADKDYSVTANSRIVVVTGGVPQQEGESRLNLVQRNVNVFKFIIPQVVKYSPDCIIIVVSNPVDILTYVTWKLSGLPQHRIIGSGTNLDSARFRHLISEKLGVHPSSCHGFILGEHGDTSVAVWSGVNVAGVSLQSLKPEIGTDQDSCNWKEVHKKVVDSAYEVIKLKGYTNWAIGFSVAEIVESITKNLGRVHPVSTMVKGMYGIETEVFLSLPCVLNGNGLTSVINQKLKDDEVGQLQKSAETLWGIQKDLKDL.

Residue 30 to 58 (GQVGMACAVSVLLKELADELALVDILEDK) participates in NAD(+) binding. Positions 107, 139, and 170 each coordinate substrate. Residue N139 coordinates NAD(+). H194 acts as the Proton acceptor in catalysis. A substrate-binding site is contributed by T249.

The protein belongs to the LDH/MDH superfamily. LDH family. Homotetramer.

It localises to the cytoplasm. It catalyses the reaction (S)-lactate + NAD(+) = pyruvate + NADH + H(+). It participates in fermentation; pyruvate fermentation to lactate; (S)-lactate from pyruvate: step 1/1. Interconverts simultaneously and stereospecifically pyruvate and lactate with concomitant interconversion of NADH and NAD(+). The protein is L-lactate dehydrogenase B chain (ldhb) of Xenopus laevis (African clawed frog).